We begin with the raw amino-acid sequence, 130 residues long: Small ribosomal subunit protein uS9 (130 aa).

Belongs to the universal ribosomal protein uS9 family.

The polypeptide is Small ribosomal subunit protein uS9 (Pseudomonas paraeruginosa (strain DSM 24068 / PA7) (Pseudomonas aeruginosa (strain PA7))).